The following is a 1068-amino-acid chain: TSC22 domain family protein 1 (1068 aa).

Positions 1–98 (MHQPPESTAA…SQAQLQAQPL (98 aa)) are required for interaction with TGFBR1 and promotion of TGF-beta signaling. 3 disordered regions span residues 23-110 (AHPA…KKSG), 125-288 (ISSN…SPAS), and 602-623 (YSQAAPPVQTPLPGAPPPQQLQ). Over residues 36 to 55 (GSASALNAAGTGVGSSATSS) the composition is skewed to low complexity. Over residues 58–70 (FPPPSLLQPPPPA) the composition is skewed to pro residues. The segment covering 84 to 100 (SLNLLSQAQLQAQPLAP) has biased composition (low complexity). Positions 133–142 (EDTESYDDLD) are enriched in acidic residues. Residues 216–240 (HPHHLHHHHHIHHGHHLQHGHHHPS) show a composition bias toward basic residues. The segment covering 241 to 250 (HVAVASASIP) has biased composition (low complexity). Positions 261–271 (KLSTTGSSDSI) are enriched in polar residues. S263 carries the phosphoserine modification. Residues 272 to 288 (TPVAPTSAVSSSGSPAS) are compositionally biased toward low complexity. Positions 609-620 (VQTPLPGAPPPQ) are enriched in pro residues. The segment at 1000 to 1021 (VLKEQIKELIEKNSQLEQENNL) is leucine-zipper. Residues 1032–1068 (AQFQAQLQTGSPPATTQPQGTTQPPAQPASQGSGPTA) are disordered. Positions 1039-1068 (QTGSPPATTQPQGTTQPPAQPASQGSGPTA) are enriched in low complexity.

It belongs to the TSC-22/Dip/Bun family. As to quaternary structure, forms homodimers. Forms heterodimers. Component of a complex composed of TSC22D1 (via N-terminus), TGFBR1 and TGFBR2; the interaction between TSC22D1 and TGFBR1 is inhibited by SMAD7 and promoted by TGFB1. Interacts with SMAD7; the interaction requires TGF-beta and the interaction is inhibited by TGFBR1. Interacts with TPT1/fortilin; interaction results in the destabilization of TSC22D1 protein and prevents TSC22D1-mediated apoptosis. Interacts with SMAD4 (via N-terminus). Interacts with ACVRL1/ALK1, ACVR1/ALK2, BMPR1A/ALK3, ACVR1B/ALK4, BMPR1B/ALK6, ACVR2A/ACTRII, and BMPR2. Interacts with SMAD6. Interacts with TFE3; the interaction is enhanced in the presence of TGF-beta. In terms of assembly, forms a heterodimer with TSC22D4/THG1. Forms a heterodimer with TSC22D4/THG1. Interacts with histone H1-2. Interacts with GNL3.

It is found in the cytoplasm. It localises to the nucleus. Its subcellular location is the cell membrane. The protein localises to the mitochondrion. In terms of biological role, transcriptional repressor. Acts on the C-type natriuretic peptide (CNP) promoter. Acts to promote CASP3-mediated apoptosis. Positively regulates TGF-beta signaling by interacting with SMAD7 which inhibits binding of SMAD7 to TGFBR1, preventing recruitment of SMURF ubiquitin ligases to TGFBR1 and inhibiting SMURF-mediated ubiquitination and degradation of TGFBR1. Contributes to enhancement of TGF-beta signaling by binding to and modulating the transcription activator activity of SMAD4. Promotes TGF-beta-induced transcription of COL1A2; via its interaction with TFE3 at E-boxes in the gene proximal promoter. Plays a role in the repression of hematopoietic precursor cell growth. Promotes IL2 deprivation-induced apoptosis in T-lymphocytes, via repression of TSC22D3/GILZ transcription and activation of the caspase cascade. May act to negatively regulate TGFB3 signaling and thereby inhibit cell death in mammary gland cells. Its function is as follows. Positively regulates cell death in response to TGFB3 during mammary gland involution. The protein is TSC22 domain family protein 1 of Macaca fascicularis (Crab-eating macaque).